We begin with the raw amino-acid sequence, 373 residues long: Putative glutamate--cysteine ligase 2 (373 aa).

The protein belongs to the glutamate--cysteine ligase type 2 family. YbdK subfamily. As to quaternary structure, homodimer.

It catalyses the reaction L-cysteine + L-glutamate + ATP = gamma-L-glutamyl-L-cysteine + ADP + phosphate + H(+). ATP-dependent carboxylate-amine ligase which exhibits weak glutamate--cysteine ligase activity. In Enterobacter sp. (strain 638), this protein is Putative glutamate--cysteine ligase 2.